A 2285-amino-acid polypeptide reads, in one-letter code: Protein Ycf2 (2285 aa).

An ATP-binding site is contributed by Gly1638–Ser1645.

This sequence belongs to the Ycf2 family.

It localises to the plastid. The protein localises to the chloroplast stroma. Functionally, probable ATPase of unknown function. Its presence in a non-photosynthetic plant (Epifagus virginiana) and experiments in tobacco indicate that it has an essential function which is probably not related to photosynthesis. In Populus trichocarpa (Western balsam poplar), this protein is Protein Ycf2.